The following is a 123-amino-acid chain: Small ribosomal subunit protein uS12 (123 aa).

3-methylthioaspartic acid is present on Asp-89.

The protein belongs to the universal ribosomal protein uS12 family. As to quaternary structure, part of the 30S ribosomal subunit. Contacts proteins S8 and S17. May interact with IF1 in the 30S initiation complex.

Its function is as follows. With S4 and S5 plays an important role in translational accuracy. In terms of biological role, interacts with and stabilizes bases of the 16S rRNA that are involved in tRNA selection in the A site and with the mRNA backbone. Located at the interface of the 30S and 50S subunits, it traverses the body of the 30S subunit contacting proteins on the other side and probably holding the rRNA structure together. The combined cluster of proteins S8, S12 and S17 appears to hold together the shoulder and platform of the 30S subunit. This chain is Small ribosomal subunit protein uS12, found in Methylobacterium radiotolerans (strain ATCC 27329 / DSM 1819 / JCM 2831 / NBRC 15690 / NCIMB 10815 / 0-1).